Here is a 335-residue protein sequence, read N- to C-terminus: Dihydroorotate dehydrogenase (quinone) (335 aa).

Residues 59-63 (AGLDK) and T83 contribute to the FMN site. K63 is a substrate binding site. 108–112 (NRMGF) is a binding site for substrate. 2 residues coordinate FMN: N136 and N169. Residue N169 coordinates substrate. S172 acts as the Nucleophile in catalysis. Residue N174 coordinates substrate. The FMN site is built by K214 and T242. 243–244 (NT) provides a ligand contact to substrate. FMN-binding positions include G265, G294, and 315–316 (YS).

The protein belongs to the dihydroorotate dehydrogenase family. Type 2 subfamily. As to quaternary structure, monomer. Requires FMN as cofactor.

The protein resides in the cell membrane. The catalysed reaction is (S)-dihydroorotate + a quinone = orotate + a quinol. It functions in the pathway pyrimidine metabolism; UMP biosynthesis via de novo pathway; orotate from (S)-dihydroorotate (quinone route): step 1/1. Catalyzes the conversion of dihydroorotate to orotate with quinone as electron acceptor. The sequence is that of Dihydroorotate dehydrogenase (quinone) from Neisseria meningitidis serogroup B (strain ATCC BAA-335 / MC58).